Here is a 445-residue protein sequence, read N- to C-terminus: Inner membrane metabolite transport protein YgcS (445 aa).

Residues 1–22 (MNTSPVRMDDLPLNRFHCRIAA) lie on the Cytoplasmic side of the membrane. A helical transmembrane segment spans residues 23–43 (LTFGAHLTDGYVLGVIGYAII). Residues 44–56 (QLTPAMQLTPFMA) are Periplasmic-facing. A helical membrane pass occupies residues 57 to 77 (GMIGGSALLGLFLGSLVLGWI). Residues 78–85 (SDHIGRQK) lie on the Cytoplasmic side of the membrane. The chain crosses the membrane as a helical span at residues 86–106 (IFTFSFLLITLASFLQFFATT). At 107-114 (PEHLIGLR) the chain is on the periplasmic side. The helical transmembrane segment at 115–135 (ILIGIGLGGDYSVGHTLLAEF) threads the bilayer. Topologically, residues 136–142 (SPRRHRG) are cytoplasmic. The chain crosses the membrane as a helical span at residues 143 to 163 (ILLGAFSVVWTVGYVLASIAG). The Periplasmic segment spans residues 164–175 (HHFISENPEAWR). The chain crosses the membrane as a helical span at residues 176–196 (WLLASAALPALLITLLRWGTP). The Cytoplasmic portion of the chain corresponds to 197–253 (ESPRWLLRQGRFAEAHAIVHRYFGPHVLLGDEVVTATHKHIKTLFSSRYWRRTAFNS). A helical membrane pass occupies residues 254–274 (VFFVCLVIPWFVIYTWLPTIA). Topologically, residues 275-286 (QTIGLEDALTAS) are periplasmic. The helical transmembrane segment at 287 to 307 (LMLNALLIVGALLGLVLTHLL) threads the bilayer. The Cytoplasmic portion of the chain corresponds to 308–311 (AHRK). The helical transmembrane segment at 312-332 (FLLGSFLLLAATLVVMACLPS) threads the bilayer. Topologically, residues 333–337 (GSSLT) are periplasmic. Residues 338–358 (LLLFVLFSTTISAVSNLVGIL) traverse the membrane as a helical segment. Topologically, residues 359-369 (PAESFPTDIRS) are cytoplasmic. A helical transmembrane segment spans residues 370–390 (LGVGFATAMSRLGAAVSTGLL). The Periplasmic portion of the chain corresponds to 391–400 (PWVLAQWGMQ). The helical transmembrane segment at 401-421 (VTLLLLATVLLVGFVVTWLWA) threads the bilayer. At 422–445 (PETKALPLVAAGNVGGANEHSVSV) the chain is on the cytoplasmic side.

The protein belongs to the major facilitator superfamily. Sugar transporter (TC 2.A.1.1) family.

The protein resides in the cell inner membrane. The polypeptide is Inner membrane metabolite transport protein YgcS (ygcS) (Escherichia coli (strain K12)).